The chain runs to 198 residues: Na(+)-translocating NADH-quinone reductase subunit E (198 aa).

Helical transmembrane passes span 11–31 (AVFI…FLAV), 35–55 (VSTA…AVPV), 77–97 (FLNF…LEMV), 110–130 (GIFL…SFMV), 140–160 (IVYG…LAGL), and 176–196 (LGIT…FSGI).

It belongs to the NqrDE/RnfAE family. Composed of six subunits; NqrA, NqrB, NqrC, NqrD, NqrE and NqrF.

The protein localises to the cell inner membrane. The catalysed reaction is a ubiquinone + n Na(+)(in) + NADH + H(+) = a ubiquinol + n Na(+)(out) + NAD(+). In terms of biological role, NQR complex catalyzes the reduction of ubiquinone-1 to ubiquinol by two successive reactions, coupled with the transport of Na(+) ions from the cytoplasm to the periplasm. NqrA to NqrE are probably involved in the second step, the conversion of ubisemiquinone to ubiquinol. This Haemophilus influenzae (strain 86-028NP) protein is Na(+)-translocating NADH-quinone reductase subunit E.